The sequence spans 371 residues: uncharacterized protein (371 aa).

Residues 43 to 148 form the EH domain; sequence DESRVPKFYL…VQAFPTASNP (106 aa). Residues 179–205 form a disordered region; sequence SMRKKKESDSKEVSAHNSPAKGAAHDL.

This is an uncharacterized protein from Caenorhabditis elegans.